The chain runs to 196 residues: Imidazoleglycerol-phosphate dehydratase (196 aa).

The protein belongs to the imidazoleglycerol-phosphate dehydratase family.

It is found in the cytoplasm. It carries out the reaction D-erythro-1-(imidazol-4-yl)glycerol 3-phosphate = 3-(imidazol-4-yl)-2-oxopropyl phosphate + H2O. It functions in the pathway amino-acid biosynthesis; L-histidine biosynthesis; L-histidine from 5-phospho-alpha-D-ribose 1-diphosphate: step 6/9. The chain is Imidazoleglycerol-phosphate dehydratase from Clostridium botulinum (strain Okra / Type B1).